The primary structure comprises 465 residues: Putative adhesin P1-like protein MPN_286 (465 aa).

Disordered stretches follow at residues 9-48 (GNGHRYGNDHRGSNSSTSGVTTQGQQSQNASGTEPASTFS), 59-78 (QGTLGGSQTTTTGKDIPKWP), and 93-167 (WRND…LPPN). Over residues 21-37 (SNSSTSGVTTQGQQSQN) the composition is skewed to low complexity. The span at 38–48 (ASGTEPASTFS) shows a compositional bias: polar residues. The segment covering 111–131 (TSATGSGQQGSSSGTTNSAGN) has biased composition (low complexity). The span at 135–144 (LKQDKVDKSG) shows a compositional bias: basic and acidic residues. Over residues 145–156 (DSVTVAETTSGD) the composition is skewed to polar residues. The span at 157–167 (NLTNYTNLPPN) shows a compositional bias: low complexity.

Belongs to the adhesin P1 family.

The sequence is that of Putative adhesin P1-like protein MPN_286 from Mycoplasma pneumoniae (strain ATCC 29342 / M129 / Subtype 1) (Mycoplasmoides pneumoniae).